Here is a 388-residue protein sequence, read N- to C-terminus: Single-stranded DNA-binding protein 3 (388 aa).

N-acetylmethionine is present on M1. The LisH domain maps to 16-48; sequence AREKLALYVYEYLLHVGAQKSAQTFLSEIRWEK. Positions 101–388 are disordered; that stretch reads VLGNIPPNDG…NYSPSMTMSV (288 aa). Over residues 126-139 the composition is skewed to pro residues; it reads GSQPSPHAQPPPHN. Residues R155, R161, and R165 each carry the asymmetric dimethylarginine modification. Low complexity-rich tracts occupy residues 200–209 and 250–268; these read MQRMNPPRGM and PNSA…TYVG. Pro residues predominate over residues 272–282; that stretch reads GGGPPGTPIMP. Residues 285–296 are compositionally biased toward polar residues; the sequence is ADSTNSSDNIYT. Positions 315-325 are enriched in gly residues; it reads GSDGPMGGMGG. Over residues 346–357 the composition is skewed to low complexity; sequence NSPNNISGISNP. Phosphoserine is present on residues S347, S352, and S355. T360 carries the post-translational modification Phosphothreonine. A compositionally biased stretch (polar residues) spans 373–388; that stretch reads HSFQNDNYSPSMTMSV. Residues S381 and S387 each carry the phosphoserine modification.

Highly expressed in all hematopoietic tissues, including spleen, lymph node, peripheral blood, bone marrow, thymus, and fetal liver, with highest expression in thymus and fetal liver. Expression is also high in heart, brain, kidney, and skeletal muscle.

It localises to the nucleus. Its function is as follows. May be involved in transcription regulation of the alpha 2(I) collagen gene where it binds to the single-stranded polypyrimidine sequences in the promoter region. The protein is Single-stranded DNA-binding protein 3 (SSBP3) of Homo sapiens (Human).